Reading from the N-terminus, the 138-residue chain is Prefoldin subunit alpha (138 aa).

It belongs to the prefoldin subunit alpha family. As to quaternary structure, heterohexamer of two alpha and four beta subunits.

It localises to the cytoplasm. In terms of biological role, molecular chaperone capable of stabilizing a range of proteins. Seems to fulfill an ATP-independent, HSP70-like function in archaeal de novo protein folding. This Methanosphaera stadtmanae (strain ATCC 43021 / DSM 3091 / JCM 11832 / MCB-3) protein is Prefoldin subunit alpha.